A 226-amino-acid chain; its full sequence is PKHD-type hydroxylase MADE_1018490 (226 aa).

The 101-residue stretch at 77–177 (RIFPPCFNRY…RIAAITWIQS (101 aa)) folds into the Fe2OG dioxygenase domain. Positions 95, 97, and 158 each coordinate Fe cation. Arg168 is a binding site for 2-oxoglutarate.

Requires Fe(2+) as cofactor. L-ascorbate serves as cofactor.

The protein is PKHD-type hydroxylase MADE_1018490 of Alteromonas mediterranea (strain DSM 17117 / CIP 110805 / LMG 28347 / Deep ecotype).